The primary structure comprises 545 residues: Chaperonin GroEL 5 (545 aa).

ATP is bound by residues 30-33 (TLGP), Lys51, 87-91 (DGTTT), Gly415, and Asp495.

The protein belongs to the chaperonin (HSP60) family. In terms of assembly, forms a cylinder of 14 subunits composed of two heptameric rings stacked back-to-back. Interacts with the co-chaperonin GroES.

It is found in the cytoplasm. The enzyme catalyses ATP + H2O + a folded polypeptide = ADP + phosphate + an unfolded polypeptide.. In terms of biological role, together with its co-chaperonin GroES, plays an essential role in assisting protein folding. The GroEL-GroES system forms a nano-cage that allows encapsulation of the non-native substrate proteins and provides a physical environment optimized to promote and accelerate protein folding. In Sinorhizobium medicae (strain WSM419) (Ensifer medicae), this protein is Chaperonin GroEL 5.